The sequence spans 376 residues: N-acetyldiaminopimelate deacetylase (376 aa).

Asp-69 is a catalytic residue. The Proton acceptor role is filled by Glu-128.

This sequence belongs to the peptidase M20A family. N-acetyldiaminopimelate deacetylase subfamily.

It catalyses the reaction N-acetyl-(2S,6S)-2,6-diaminopimelate + H2O = (2S,6S)-2,6-diaminopimelate + acetate. It functions in the pathway amino-acid biosynthesis; L-lysine biosynthesis via DAP pathway; LL-2,6-diaminopimelate from (S)-tetrahydrodipicolinate (acetylase route): step 3/3. Its function is as follows. Catalyzes the conversion of N-acetyl-diaminopimelate to diaminopimelate and acetate. The chain is N-acetyldiaminopimelate deacetylase from Bacillus cereus (strain 03BB102).